A 254-amino-acid polypeptide reads, in one-letter code: Segregation and condensation protein A (254 aa).

Belongs to the ScpA family. As to quaternary structure, component of a cohesin-like complex composed of ScpA, ScpB and the Smc homodimer, in which ScpA and ScpB bind to the head domain of Smc. The presence of the three proteins is required for the association of the complex with DNA.

Its subcellular location is the cytoplasm. Its function is as follows. Participates in chromosomal partition during cell division. May act via the formation of a condensin-like complex containing Smc and ScpB that pull DNA away from mid-cell into both cell halves. The sequence is that of Segregation and condensation protein A from Brevibacillus brevis (strain 47 / JCM 6285 / NBRC 100599).